The following is an 80-amino-acid chain: Small ribosomal subunit protein bS18 (80 aa).

Belongs to the bacterial ribosomal protein bS18 family. Part of the 30S ribosomal subunit. Forms a tight heterodimer with protein bS6.

Its function is as follows. Binds as a heterodimer with protein bS6 to the central domain of the 16S rRNA, where it helps stabilize the platform of the 30S subunit. The sequence is that of Small ribosomal subunit protein bS18 from Clostridium perfringens (strain ATCC 13124 / DSM 756 / JCM 1290 / NCIMB 6125 / NCTC 8237 / Type A).